The following is a 183-amino-acid chain: Endoribonuclease YbeY (183 aa).

3 residues coordinate Zn(2+): His142, His146, and His152.

The protein belongs to the endoribonuclease YbeY family. Requires Zn(2+) as cofactor.

It is found in the cytoplasm. Single strand-specific metallo-endoribonuclease involved in late-stage 70S ribosome quality control and in maturation of the 3' terminus of the 16S rRNA. This Trichodesmium erythraeum (strain IMS101) protein is Endoribonuclease YbeY.